A 601-amino-acid chain; its full sequence is Deoxyhypusine synthase (601 aa).

Residues 109–113 (ANLMG) and 184–186 (SGG) each bind NAD(+). Residue 189 to 190 (EH) coordinates spermidine. The segment at 210–242 (GHVSSTVSSEATAPPKGLQQRAEKPLGTRAAAG) is disordered. The segment covering 211–220 (HVSSTVSSEA) has biased composition (polar residues). Residue Asp398 participates in NAD(+) binding. The interval 411–451 (PAARPAHRKGGPVADENAGNSKELKRSRKASSSSSTSATAV) is disordered. The segment covering 440 to 451 (ASSSSSTSATAV) has biased composition (low complexity). Residue Gly489 coordinates NAD(+). His494 contacts spermidine. 514–515 (NG) contacts NAD(+). Spermidine-binding positions include 520-522 (GSD) and 529-535 (EALSWGK). The active-site Nucleophile is the Lys535. 548 to 549 (EV) serves as a coordination point for NAD(+). The disordered stretch occupies residues 568–601 (RRATDDAQPRRKRSSRGARPPQDVSGHSHLCRGE).

It belongs to the deoxyhypusine synthase family. Homodimer. Requires NAD(+) as cofactor.

The enzyme catalyses [eIF5A protein]-L-lysine + spermidine = [eIF5A protein]-deoxyhypusine + propane-1,3-diamine. It participates in protein modification; eIF5A hypusination. N1-guanyl-1,7-diaminoheptane has a small inhibitory effect on activity. Catalyzes the NAD-dependent oxidative cleavage of spermidine and the subsequent transfer of the butylamine moiety of spermidine to the epsilon-amino group of a specific lysine residue of the eIF-5A precursor protein to form the intermediate deoxyhypusine residue. The sequence is that of Deoxyhypusine synthase from Leishmania donovani.